A 310-amino-acid chain; its full sequence is Proline-rich 28 kDa antigen (310 aa).

The signal sequence occupies residues 1–32; that stretch reads MIQIARTWRVFAGGMATGFIGVVLVTAGKASA. A disordered region spans residues 278 to 310; that stretch reads QAPAPAPGSAPVGLPGQAPGYPPAGTLTPVPPR.

This sequence to M.leprae ML0031.

This is Proline-rich 28 kDa antigen (mtc28) from Mycobacterium bovis (strain ATCC BAA-935 / AF2122/97).